We begin with the raw amino-acid sequence, 953 residues long: Isoleucine--tRNA ligase (953 aa).

Residues 57–67 (PYANGDIHIGH) carry the 'HIGH' region motif. Residue Glu582 participates in L-isoleucyl-5'-AMP binding. Residues 623-627 (KMSKS) carry the 'KMSKS' region motif. Residue Lys626 participates in ATP binding. 4 residues coordinate Zn(2+): Cys916, Cys919, Cys936, and Cys939.

It belongs to the class-I aminoacyl-tRNA synthetase family. IleS type 1 subfamily. Monomer. Zn(2+) serves as cofactor.

It is found in the cytoplasm. The catalysed reaction is tRNA(Ile) + L-isoleucine + ATP = L-isoleucyl-tRNA(Ile) + AMP + diphosphate. In terms of biological role, catalyzes the attachment of isoleucine to tRNA(Ile). As IleRS can inadvertently accommodate and process structurally similar amino acids such as valine, to avoid such errors it has two additional distinct tRNA(Ile)-dependent editing activities. One activity is designated as 'pretransfer' editing and involves the hydrolysis of activated Val-AMP. The other activity is designated 'posttransfer' editing and involves deacylation of mischarged Val-tRNA(Ile). This Bordetella pertussis (strain Tohama I / ATCC BAA-589 / NCTC 13251) protein is Isoleucine--tRNA ligase.